A 321-amino-acid polypeptide reads, in one-letter code: Protein-L-isoaspartate O-methyltransferase (321 aa).

Residues 21–31 (KPAERQREKRI) show a composition bias toward basic and acidic residues. Residues 21 to 65 (KPAERQREKRISSGVNAVSLPTPARTASAERASSTPAPGPGPQRV) are disordered. Positions 41 to 56 (PTPARTASAERASSTP) are enriched in low complexity. The active site involves S153.

Belongs to the methyltransferase superfamily. L-isoaspartyl/D-aspartyl protein methyltransferase family.

The protein resides in the cytoplasm. It catalyses the reaction [protein]-L-isoaspartate + S-adenosyl-L-methionine = [protein]-L-isoaspartate alpha-methyl ester + S-adenosyl-L-homocysteine. Catalyzes the methyl esterification of L-isoaspartyl residues in peptides and proteins that result from spontaneous decomposition of normal L-aspartyl and L-asparaginyl residues. It plays a role in the repair and/or degradation of damaged proteins. The chain is Protein-L-isoaspartate O-methyltransferase from Ralstonia nicotianae (strain ATCC BAA-1114 / GMI1000) (Ralstonia solanacearum).